The sequence spans 60 residues: Short neurotoxin 1 (60 aa).

Disulfide bonds link C3–C22, C17–C39, C41–C52, and C53–C58.

This sequence belongs to the three-finger toxin family. Short-chain subfamily. Type I alpha-neurotoxin sub-subfamily. As to expression, expressed by the venom gland.

Its subcellular location is the secreted. Its function is as follows. Binds to muscle nicotinic acetylcholine receptor (nAChR) and inhibit acetylcholine from binding to the receptor, thereby impairing neuromuscular transmission. The sequence is that of Short neurotoxin 1 from Hydrophis cyanocinctus (Asian annulated sea snake).